Here is a 122-residue protein sequence, read N- to C-terminus: Large ribosomal subunit protein bL12 (122 aa).

Belongs to the bacterial ribosomal protein bL12 family. In terms of assembly, homodimer. Part of the ribosomal stalk of the 50S ribosomal subunit. Forms a multimeric L10(L12)X complex, where L10 forms an elongated spine to which 2 to 4 L12 dimers bind in a sequential fashion. Binds GTP-bound translation factors.

Functionally, forms part of the ribosomal stalk which helps the ribosome interact with GTP-bound translation factors. Is thus essential for accurate translation. In Enterococcus faecalis (strain ATCC 700802 / V583), this protein is Large ribosomal subunit protein bL12.